Here is a 1410-residue protein sequence, read N- to C-terminus: Pogo transposable element with ZNF domain (1410 aa).

Positions 238–291 (RSTVPQSQSQQTKSTPSTSTTPTATQPTSLGQLAVQSPGQSNQTTNPKLAPSFP) are disordered. The segment covering 239–266 (STVPQSQSQQTKSTPSTSTTPTATQPTS) has biased composition (low complexity). Over residues 267 to 284 (LGQLAVQSPGQSNQTTNP) the composition is skewed to polar residues. K319 participates in a covalent cross-link: Glycyl lysine isopeptide (Lys-Gly) (interchain with G-Cter in SUMO2). The interval 332-361 (QSPGPVVVSNNSSAHGSQRTSGPESSMKVT) is disordered. S333 bears the Phosphoserine mark. The span at 345 to 361 (AHGSQRTSGPESSMKVT) shows a compositional bias: polar residues. Residue K359 forms a Glycyl lysine isopeptide (Lys-Gly) (interchain with G-Cter in SUMO2) linkage. S363 carries the phosphoserine modification. The segment at 375–397 (KICPRCNAQFRVTEALRGHMCYC) adopts a C2H2-type 1; atypical zinc-finger fold. The tract at residues 409–456 (KSLDSEPSVPSAAKPPSPEKTAPVASTPSSTPIPALSPPTKVPEPNEN) is disordered. K422 is covalently cross-linked (Glycyl lysine isopeptide (Lys-Gly) (interchain with G-Cter in SUMO2)). Phosphoserine is present on S425. Phosphothreonine is present on T439. S445 carries the post-translational modification Phosphoserine. K449 is covalently cross-linked (Glycyl lysine isopeptide (Lys-Gly) (interchain with G-Cter in SUMO2)). T463 is subject to Phosphothreonine. K489 is covalently cross-linked (Glycyl lysine isopeptide (Lys-Gly) (interchain with G-Cter in SUMO2)). 6 consecutive C2H2-type zinc fingers follow at residues 494-516 (FRCP…MKHH), 530-553 (TICQ…ENVH), 560-583 (TKCK…KDTH), 590-613 (YVCQ…RMIH), 619-641 (LLCP…YMRH), and 647-670 (YHCN…LQHH). K629 participates in a covalent cross-link: Glycyl lysine isopeptide (Lys-Gly) (interchain with G-Cter in SUMO2). A Glycyl lysine isopeptide (Lys-Gly) (interchain with G-Cter in SUMO2) cross-link involves residue K677. Residues 693-715 (SRGQPRTVPVSSNDTPPSALQEA) form a disordered region. Residues 701 to 710 (PVSSNDTPPS) are compositionally biased toward polar residues. The C2H2-type 8 zinc-finger motif lies at 771–794 (VHCSLCRYSTCCSRAYANHMINNH). K801 participates in a covalent cross-link: Glycyl lysine isopeptide (Lys-Gly) (interchain with G-Cter in SUMO2). The segment at 810–850 (VSGIKLACTSCTFVTSVGDAMAKHLVFNPSHRSSSILPRGL) is required for interaction with CBX5. A C2H2-type 9 zinc finger spans residues 815 to 840 (LACTSCTFVTSVGDAMAKHLVFNPSH). Phosphoserine is present on S856. Disordered stretches follow at residues 857-927 (RHGQ…PQAL) and 942-969 (VDDQ…GVGK). Positions 860 to 870 (QTRDRVHDRNV) are enriched in basic and acidic residues. K883 is covalently cross-linked (Glycyl lysine isopeptide (Lys-Gly) (interchain with G-Cter in SUMO2)). Over residues 892-915 (ATPAEPEELLTPLAPALPSPASTA) the composition is skewed to low complexity. Residues 1015 to 1085 (GENLEGKYLS…MLRHHLTPHA (71 aa)) enclose the HTH CENPB-type domain. Residues 1117 to 1323 (LPLSMIVAID…DCPELVQRSF (207 aa)) form the DDE-1 domain. S1338 is subject to Phosphoserine. Positions 1340-1360 (TRNADMQEELIASLEEQLKLS) form a coiled coil. Positions 1360–1400 (SGEHSESSTPRPRSSPEETIEPESLHQLFEGESETESFYGF) are disordered. Phosphoserine is present on residues S1364 and S1367. A Phosphothreonine modification is found at T1368. Phosphoserine occurs at positions 1373 and 1374. Residue T1378 is modified to Phosphothreonine. The short motif at 1380-1404 (EPESLHQLFEGESETESFYGFEEAD) is the Integrase domain-binding motif (IBM) element. A Phosphoserine; by CK2 modification is found at S1392. Phosphothreonine is present on T1394. S1396 is modified (phosphoserine; by CK2).

As to quaternary structure, interacts with CBX1, CBX3, MAD2L2 and CHAMP1. Interacts with CBX5; POGZ competes with PXVXL motif-containing proteins such as INCENP and TRIM28 for interaction with CBX5. Interacts (via IBM motif) with PSIP1 isoform 1 (via IBD domain); phosphorylation increases its affinity for PSIP1. Interacts with HDGFL2. Phosphorylation increases its interaction with PSIP1.

The protein localises to the nucleus. Its subcellular location is the chromosome. The protein resides in the cytoplasm. Plays a role in mitotic cell cycle progression and is involved in kinetochore assembly and mitotic sister chromatid cohesion. Probably through its association with CBX5 plays a role in mitotic chromosome segregation by regulating aurora kinase B/AURKB activation and AURKB and CBX5 dissociation from chromosome arms. Promotes the repair of DNA double-strand breaks through the homologous recombination pathway. The sequence is that of Pogo transposable element with ZNF domain (POGZ) from Homo sapiens (Human).